A 402-amino-acid chain; its full sequence is Bacteriochlorophyllide c C-7(1)-hydroxylase (402 aa).

One can recognise a Radical SAM core domain in the interval Val-104–Pro-359. 3 residues coordinate [4Fe-4S] cluster: Cys-120, Cys-129, and Cys-132.

It belongs to the radical SAM superfamily. [4Fe-4S] cluster serves as cofactor.

The catalysed reaction is a bacteriochlorophyllide c + 2 S-adenosyl-L-methionine + H2O = a bacteriochlorophyllide e + 2 5'-deoxyadenosine + 2 L-methionine + 2 H(+). The enzyme catalyses a bacteriochlorophyllide d + 2 S-adenosyl-L-methionine + H2O = a bacteriochlorophyllide f + 2 5'-deoxyadenosine + 2 L-methionine + 2 H(+). It functions in the pathway porphyrin-containing compound metabolism; bacteriochlorophyll biosynthesis. In terms of biological role, involved in the biosynthesis of bacteriochlorophyll e (BChl e). Catalyzes two consecutive hydroxylation reactions of the C-7 methyl group of bacteriochlorophyllide c (BChlide c) to form a geminal diol intermediate that spontaneously dehydrates to produce the formyl group of bacteriochlorophyllide e (BChlide e). Also able to catalyze the same reaction for bacteriochlorophyllide d (BChlide d) to give rise to bacteriochlorophyllide f (BChlide f). The polypeptide is Bacteriochlorophyllide c C-7(1)-hydroxylase (Chlorobaculum limnaeum).